A 1488-amino-acid chain; its full sequence is Chromosome partition protein MukB (1488 aa).

ATP is bound at residue 34-41 (GGNGAGKS). Coiled coils occupy residues 326-418 (LEAD…QYNQ), 444-472 (LDTF…QTAH), and 509-602 (RHLA…QRAP). Positions 666–783 (PGGAEDQRLN…SLPIFGRAAR (118 aa)) are flexible hinge. Coiled coils occupy residues 835–923 (EAEI…AKLE), 977–1116 (EMLS…AKAG), and 1209–1265 (VEAI…LQSV). Residues 1049–1074 (ADSGAEERARQRRDELHAQLSNNRSR) form a disordered region. Residues 1051-1065 (SGAEERARQRRDELH) show a composition bias toward basic and acidic residues.

This sequence belongs to the SMC family. MukB subfamily. As to quaternary structure, homodimerization via its hinge domain. Binds to DNA via its C-terminal region. Interacts, and probably forms a ternary complex, with MukE and MukF via its C-terminal region. The complex formation is stimulated by calcium or magnesium. Interacts with tubulin-related protein FtsZ.

Its subcellular location is the cytoplasm. It is found in the nucleoid. Functionally, plays a central role in chromosome condensation, segregation and cell cycle progression. Functions as a homodimer, which is essential for chromosome partition. Involved in negative DNA supercoiling in vivo, and by this means organize and compact chromosomes. May achieve or facilitate chromosome segregation by condensation DNA from both sides of a centrally located replisome during cell division. This chain is Chromosome partition protein MukB, found in Salmonella arizonae (strain ATCC BAA-731 / CDC346-86 / RSK2980).